The primary structure comprises 493 residues: Dipeptide permease D (493 aa).

13 helical membrane-spanning segments follow: residues 14–34 (VVAL…LLIL), 49–69 (ELFS…GYLA), 91–111 (LVLG…AIIV), 138–158 (GGFS…PIAC), 167–187 (WAMG…IFLC), 212–232 (NWGW…VLFW), 235–255 (WSVY…AKIY), 267–287 (LGLI…AQQG), 312–332 (MFQS…AWLV), 344–364 (IWGK…ILTL), 379–399 (LMVL…PVAM), 413–433 (VLTG…AGVI), and 458–478 (VFEQ…LIWL).

This sequence belongs to the major facilitator superfamily. Proton-dependent oligopeptide transporter (POT/PTR) (TC 2.A.17) family. DtpD subfamily.

The protein resides in the cell inner membrane. Its function is as follows. Probable proton-dependent permease that transports dipeptides. This is Dipeptide permease D from Salmonella typhimurium (strain 14028s / SGSC 2262).